Consider the following 451-residue polypeptide: Tryptophan--tRNA ligase (451 aa).

ATP is bound by residues 10–12 and 18–19; these read TTT and GN. The 'HIGH' region motif lies at 11 to 19; the sequence is TTGTPHLGN. Asp143 provides a ligand contact to L-tryptophan. ATP is bound by residues 155–157, Leu195, and 202–206; these read GRD and KMSKS. A 'KMSKS' region motif is present at residues 202–206; sequence KMSKS.

It belongs to the class-I aminoacyl-tRNA synthetase family. As to quaternary structure, homodimer.

It is found in the cytoplasm. It catalyses the reaction tRNA(Trp) + L-tryptophan + ATP = L-tryptophyl-tRNA(Trp) + AMP + diphosphate + H(+). Catalyzes the attachment of tryptophan to tRNA(Trp). This Bordetella bronchiseptica (strain ATCC BAA-588 / NCTC 13252 / RB50) (Alcaligenes bronchisepticus) protein is Tryptophan--tRNA ligase.